The primary structure comprises 430 residues: Enolase (430 aa).

Residue Q167 participates in (2R)-2-phosphoglycerate binding. Residue E209 is the Proton donor of the active site. Mg(2+)-binding residues include D246, E287, and D314. The (2R)-2-phosphoglycerate site is built by K339, R368, S369, and K390. The Proton acceptor role is filled by K339.

It belongs to the enolase family. Requires Mg(2+) as cofactor.

The protein localises to the cytoplasm. It localises to the secreted. The protein resides in the cell surface. The enzyme catalyses (2R)-2-phosphoglycerate = phosphoenolpyruvate + H2O. It participates in carbohydrate degradation; glycolysis; pyruvate from D-glyceraldehyde 3-phosphate: step 4/5. Catalyzes the reversible conversion of 2-phosphoglycerate (2-PG) into phosphoenolpyruvate (PEP). It is essential for the degradation of carbohydrates via glycolysis. The chain is Enolase from Prochlorococcus marinus (strain MIT 9215).